A 425-amino-acid polypeptide reads, in one-letter code: SWI5-dependent HO expression protein 3 (425 aa).

Residues 24-45 (NLESSPTKDRNTSSQNASSSRV) are disordered. The segment covering 35-45 (TSSQNASSSRV) has biased composition (polar residues). Residues 68 to 197 (QNLLSKLELA…LELSNQNLNY (130 aa)) adopt a coiled-coil conformation. Positions 322 to 425 (RKTPNTNDSS…NSMVVHGAQS (104 aa)) are disordered. The segment covering 326–338 (NTNDSSSNGNSSN) has biased composition (low complexity). The residue at position 343 (Ser343) is a Phosphoserine. Polar residues-rich tracts occupy residues 345–358 (YTAS…SIPK) and 382–397 (KTNV…SPTI). Ser394 carries the phosphoserine modification.

Belongs to the SHE3 family. In terms of assembly, interacts with SHE2 and MYO4.

It localises to the endoplasmic reticulum membrane. Its function is as follows. RNA-binding protein that binds specific mRNAs including the ASH1 mRNA, coding for a repressor of the HO endonuclease. Part of the mRNA localization machinery that restricts accumulation of certain proteins to the bud and in the daughter cell. Required for the delivery of cortical endoplasmic reticulum into the emerging bud. The sequence is that of SWI5-dependent HO expression protein 3 (SHE3) from Saccharomyces cerevisiae (strain ATCC 204508 / S288c) (Baker's yeast).